Consider the following 150-residue polypeptide: Small ribosomal subunit protein uS15 (150 aa).

Residues 1–22 (MNKRREKGQSHSTRPPHPQPPQ) are disordered.

Belongs to the universal ribosomal protein uS15 family. Part of the 30S ribosomal subunit.

This is Small ribosomal subunit protein uS15 from Aeropyrum pernix (strain ATCC 700893 / DSM 11879 / JCM 9820 / NBRC 100138 / K1).